The following is a 66-amino-acid chain: Large ribosomal subunit protein bL33c (66 aa).

It belongs to the bacterial ribosomal protein bL33 family.

It localises to the plastid. The protein resides in the chloroplast. This is Large ribosomal subunit protein bL33c from Adiantum capillus-veneris (Maidenhair fern).